The primary structure comprises 73 residues: Kazal peptide Pr13a (73 aa).

The signal sequence occupies residues 1–20 (MKYIILFLVLIGLQANLALG). Residues 21 to 73 (SKCKCDCTKYPYSPVCAKELKTGDTETFNNVCQLQCYNCTHMKNYVVIYSGSC) form the Kazal-like domain. 3 cysteine pairs are disulfide-bonded: Cys-23–Cys-59, Cys-27–Cys-52, and Cys-36–Cys-73.

As to expression, expressed by the venom gland (anterior main gland) (at protein level).

The protein localises to the secreted. May act as a serine protease inhibitor, since it possess the kazal serine protease inhibitor signature. This chain is Kazal peptide Pr13a, found in Platymeris rhadamanthus (Red spot assassin bug).